The sequence spans 174 residues: Membrane protein NfeD2 (174 aa).

3 helical membrane passes run 16 to 36 (LIIA…FSGL), 47 to 67 (LVLS…LVLP), and 72 to 92 (LIAL…HIFV).

The protein belongs to the NfeD family.

It localises to the cell membrane. Its subcellular location is the membrane raft. Functionally, plays a role in assembly of FloT membrane rafts, probably recruited to rafts by FloT. This is Membrane protein NfeD2 from Bacillus subtilis (strain 168).